Reading from the N-terminus, the 1356-residue chain is Vascular endothelial growth factor receptor 2 (1356 aa).

Positions M1–A19 are cleaved as a signal peptide. Residues A20–E764 lie on the Extracellular side of the membrane. 6 N-linked (GlcNAc...) asparagine glycosylation sites follow: N46, N66, N96, N143, N158, and N245. 7 consecutive Ig-like C2-type domains span residues N46–L110, N141–E207, Y224–T320, P328–S414, P421–T548, P551–T660, and P667–I753. A disulfide bridge connects residues C53 and C103. C150 and C200 are joined by a disulfide. C246 and C307 are oxidised to a cystine. N-linked (GlcNAc...) asparagine glycans are attached at residues N318, N374, N395, N511, N523, N580, N613, N619, N631, N675, N704, and N721. 2 disulfides stabilise this stretch: C445–C530 and C571–C642. An intrachain disulfide couples C688 to C737. Residues I765 to I785 form a helical membrane-spanning segment. Over L786–V1356 the chain is Cytoplasmic. Y801 is modified (phosphotyrosine). The region spanning L834–N1162 is the Protein kinase domain. Residues L840–V848 and K868 contribute to the ATP site. The residue at position 951 (Y951) is a Phosphotyrosine; by autocatalysis. 2 positions are modified to phosphoserine: S982 and S984. Y996 is modified (phosphotyrosine; by autocatalysis). C1024 and C1045 are oxidised to a cystine. Residue D1028 is the Proton acceptor of the active site. 4 positions are modified to phosphotyrosine; by autocatalysis: Y1054, Y1059, Y1175, and Y1214. A phosphoserine mark is found at S1231 and S1235. T1238 is subject to Phosphothreonine. Residues D1274–V1318 form a disordered region. Over residues S1296 to Y1309 the composition is skewed to polar residues. Residues Y1305, Y1309, and Y1319 each carry the phosphotyrosine; by autocatalysis modification.

It belongs to the protein kinase superfamily. Tyr protein kinase family. CSF-1/PDGF receptor subfamily. As to quaternary structure, homodimer in the presence of bound dimeric VEGFA, VEGFC or VEGFD ligands; monomeric in the absence of bound ligands. Can also form heterodimers with FLT1/VEGFR1 and KDR/VEGFR2. Interacts (tyrosine phosphorylated) with LFYN, NCK1, PLCG1. Interacts (tyrosine-phosphorylated active form preferentially) with DAB2IP (via C2 domain and active form preferentially); the interaction occurs at the late phase of VEGFA response and inhibits KDR/VEGFR2 activity. Interacts with SHBSH2D2A/TSAD, GRB2, MYOF, CBL and PDCD6. Interacts (via C-terminus domain) with ERN1 (via kinase domain); the interaction is facilitated in a XBP1 isoform 1- and vascular endothelial growth factor (VEGF)-dependent manner in endothelial cells. Interacts (via juxtamembrane region) with chaperone PDCL3 (via thioredoxin fold region); the interaction leads to increased KDR/VEGFR2 abundance through inhibition of its ubiquitination and degradation. Interacts (tyrosine phosphorylated) with CCDC88A/GIV (via SH2-like region); binding requires autophosphorylation of the KDR/VEGFR2 C-terminal region. Interacts with isoform 2 of BSG. Interacts with SLC31A1; this interaction is induced upon VEGFA stimulation leading to SLC31A1 and KDR subsequent co-internalization to early endosomes, thereby activating KDR downstream signaling in endothelial cells. In terms of assembly, (Microbial infection) Interacts with HIV-1 Tat. Post-translationally, N-glycosylated. Ubiquitinated. Tyrosine phosphorylation of the receptor promotes its poly-ubiquitination, leading to its degradation via the proteasome or lysosomal proteases. In terms of processing, autophosphorylated on tyrosine residues upon ligand binding. Autophosphorylation occurs in trans, i.e. one subunit of the dimeric receptor phosphorylates tyrosine residues on the other subunit. Phosphorylation at Tyr-951 is important for interaction with SH2D2A/TSAD and VEGFA-mediated reorganization of the actin cytoskeleton. Phosphorylation at Tyr-1175 is important for interaction with PLCG1 and SHB. Phosphorylation at Tyr-1214 is important for interaction with NCK1 and FYN. Dephosphorylated by PTPRB. Dephosphorylated by PTPRJ at Tyr-951, Tyr-996, Tyr-1054, Tyr-1059, Tyr-1175 and Tyr-1214. Post-translationally, the inhibitory disulfide bond between Cys-1024 and Cys-1045 may serve as a specific molecular switch for H(2)S-induced modification that regulates KDR/VEGFR2 function. In terms of tissue distribution, detected in cornea (at protein level). Widely expressed.

The protein resides in the cell junction. It localises to the endoplasmic reticulum. Its subcellular location is the cell membrane. The protein localises to the cytoplasm. It is found in the nucleus. The protein resides in the cytoplasmic vesicle. It localises to the early endosome. Its subcellular location is the secreted. It carries out the reaction L-tyrosyl-[protein] + ATP = O-phospho-L-tyrosyl-[protein] + ADP + H(+). Its activity is regulated as follows. Present in an inactive conformation in the absence of bound ligand. Binding of VEGFA, VEGFC or VEGFD leads to dimerization and activation by autophosphorylation on tyrosine residues. Inhibited by the small molecule PTK inhibitor SU5614 ((3Z)-5-Chloro-3-[(3,5-dimethyl-1H-pyrrol-2-yl)methylene]-1,3-dihydro-2H-indol-2-one). May be regulated by hydrogen sulfide (H(2)S) levels via a H(2)S-sensitive intracellular disulfide bond. Functionally, tyrosine-protein kinase that acts as a cell-surface receptor for VEGFA, VEGFC and VEGFD. Plays an essential role in the regulation of angiogenesis, vascular development, vascular permeability, and embryonic hematopoiesis. Promotes proliferation, survival, migration and differentiation of endothelial cells. Promotes reorganization of the actin cytoskeleton. Isoforms lacking a transmembrane domain, such as isoform 2 and isoform 3, may function as decoy receptors for VEGFA, VEGFC and/or VEGFD. Isoform 2 plays an important role as negative regulator of VEGFA- and VEGFC-mediated lymphangiogenesis by limiting the amount of free VEGFA and/or VEGFC and preventing their binding to FLT4. Modulates FLT1 and FLT4 signaling by forming heterodimers. Binding of vascular growth factors to isoform 1 leads to the activation of several signaling cascades. Activation of PLCG1 leads to the production of the cellular signaling molecules diacylglycerol and inositol 1,4,5-trisphosphate and the activation of protein kinase C. Mediates activation of MAPK1/ERK2, MAPK3/ERK1 and the MAP kinase signaling pathway, as well as of the AKT1 signaling pathway. Mediates phosphorylation of PIK3R1, the regulatory subunit of phosphatidylinositol 3-kinase, reorganization of the actin cytoskeleton and activation of PTK2/FAK1. Required for VEGFA-mediated induction of NOS2 and NOS3, leading to the production of the signaling molecule nitric oxide (NO) by endothelial cells. Phosphorylates PLCG1. Promotes phosphorylation of FYN, NCK1, NOS3, PIK3R1, PTK2/FAK1 and SRC. The polypeptide is Vascular endothelial growth factor receptor 2 (Homo sapiens (Human)).